Here is a 232-residue protein sequence, read N- to C-terminus: Biosynthetic peptidoglycan transglycosylase (232 aa).

A helical membrane pass occupies residues 12–31; the sequence is YLLWFMAASVVLVAVLRWVP.

It belongs to the glycosyltransferase 51 family.

The protein localises to the cell inner membrane. It carries out the reaction [GlcNAc-(1-&gt;4)-Mur2Ac(oyl-L-Ala-gamma-D-Glu-L-Lys-D-Ala-D-Ala)](n)-di-trans,octa-cis-undecaprenyl diphosphate + beta-D-GlcNAc-(1-&gt;4)-Mur2Ac(oyl-L-Ala-gamma-D-Glu-L-Lys-D-Ala-D-Ala)-di-trans,octa-cis-undecaprenyl diphosphate = [GlcNAc-(1-&gt;4)-Mur2Ac(oyl-L-Ala-gamma-D-Glu-L-Lys-D-Ala-D-Ala)](n+1)-di-trans,octa-cis-undecaprenyl diphosphate + di-trans,octa-cis-undecaprenyl diphosphate + H(+). The protein operates within cell wall biogenesis; peptidoglycan biosynthesis. Its function is as follows. Peptidoglycan polymerase that catalyzes glycan chain elongation from lipid-linked precursors. The polypeptide is Biosynthetic peptidoglycan transglycosylase (Pseudomonas aeruginosa (strain ATCC 15692 / DSM 22644 / CIP 104116 / JCM 14847 / LMG 12228 / 1C / PRS 101 / PAO1)).